A 1429-amino-acid polypeptide reads, in one-letter code: MEEHTFGVQQIQPNVISVRLFKRKVGGLGFLVKERVSKPPVIISDLIRGGAAEQSGLIQAGDIILAVNDRPLVDLSYDSALEVLRGIASETHVVLILRGPEGFTTHLETTFTGDGTPKTIRVTQPLGTPTKAVDLSRQPSASKDQPLAVDRVPGPSNGPQHAQGRGQGAGSVSQANGVAIDPTMKNTKANLQDSGEQDELLKEIEPVLSILTGGGKAVNRGGPAKAEMKDTGIQVDRDLDGKLHKAPPLGGENDRVFNDLWGKGNVPVVLNNPYSENEQSPASGKQSPTKNGSPSRCPRFLKVKNWETDVVLTDTLHLKSTLETGCTEQICMGSIMLPSHHIRKSEDVRTKDQLFPLAKEFLDQYYSSIKRFGSKAHMDRLEEVNKEIESTSTYQLKDTELIYGAKHAWRNASRCVGRIQWSKLQVFDARDCTTAHGMFNYICNHVKYATNKGNLRSAITIFPQRTDGKHDFRVWNSQLIRYAGYKQPDGSTLGDPANVEFTEICIQQGWKPPRGRFDVLPLLLQANGNDPELFQIPPELVLEVPIRHPKFDWFKDLGLKWYGLPAVSNMLLEIGGLEFSACPFSGWYMGTEIGVRDYCDNSRYNILEEVAKKMDLDMRKTSSLWKDQALVEINIAVLYSFQSDKVTIVDHHSATESFIKHMENEYRCRGGCPADWVWIVPPMSGSITPVFHQEMLNYRLTPSFEYQPDPWNTHVWKGTNGTPTKRRAIGFKKLAEAVKFSAKLMGQAMAKRVKATILYATETGKSQAYAKTLCEIFKHAFDAKAMSMEEYDIVHLEHEALVLVVTSTFGNGDPPENGEKFGCALMEMRHPNSVQEERKSYKVRFNSVSSYSDSRKSSGDGPDLRDNFESTGPLANVRFSVFGLGSRAYPHFCAFGHAVDTLLEELGGERILKMREGDELCGQEEAFRTWAKKVFKAACDVFCVGDDVNIEKANNSLISNDRSWKRNKFRLTYVAEAPELTQGLSNVHKKRVSAARLLSRQNLQSPKSSRSTIFVRLHTNGNQELQYQPGDHLGVFPGNHEDLVNALIERLEDAPPANHVVKVEMLEERNTALGVISNWKDESRLPPCTIFQAFKYYLDITTPPTPLQLQQFASLATNEKEKQRLLVLSKGLQEYEEWKWGKNPTMVEVLEEFPSIQMPATLLLTQLSLLQPRYYSISSSPDMYPDEVHLTVAIVSYHTRDGEGPVHHGVCSSWLNRIQADDVVPCFVRGAPSFHLPRNPQVPCILVGPGTGIAPFRSFWQQRQFDIQHKGMNPCPMVLVFGCRQSKIDHIYREETLQAKNKGVFRELYTAYSREPDRPKKYVQDVLQEQLAESVYRALKEQGGHIYVCGDVTMAADVLKAIQRIMTQQGKLSEEDAGVFISRLRDDNRYHEDIFGVTLRTYEVTNRLRSESIAFIEESKKDTDEVFSS.

The tract at residues 1 to 200 (MEEHTFGVQQ…LQDSGEQDEL (200 aa)) is interaction with NOSIP. The region spanning 17–99 (SVRLFKRKVG…ETHVVLILRG (83 aa)) is the PDZ domain. Disordered stretches follow at residues 114–174 (DGTP…SVSQ) and 271–298 (NNPYSENEQSPASGKQSPTKNGSPSRCP). Residues 163 to 240 (QGRGQGAGSV…TGIQVDRDLD (78 aa)) are interaction with DYNLL1/PIN. The segment covering 272 to 294 (NPYSENEQSPASGKQSPTKNGSP) has biased composition (polar residues). A Phosphoserine modification is found at S280. A (6R)-L-erythro-5,6,7,8-tetrahydrobiopterin-binding site is contributed by S334. A heme b-binding site is contributed by C415. Positions 478, 587, 588, and 592 each coordinate L-arginine. (6R)-L-erythro-5,6,7,8-tetrahydrobiopterin contacts are provided by V677, W678, and F691. Y706 is a binding site for heme b. The calmodulin-binding stretch occupies residues 725 to 745 (KRRAIGFKKLAEAVKFSAKLM). A Flavodoxin-like domain is found at 755–935 (ATILYATETG…AFRTWAKKVF (181 aa)). FMN-binding residues include T761, E762, T763, K765, S766, S807, T808, and G812. 3 positions are modified to phosphoserine: S847, S857, and S858. 5 residues coordinate FMN: S886, H891, C893, E919, and Q923. In terms of domain architecture, FAD-binding FR-type spans 990–1237 (KRVSAARLLS…VRGAPSFHLP (248 aa)). NADP(+) is bound at residue R1010. FAD-binding residues include H1032, R1173, Y1174, Y1175, S1176, T1191, and A1193. Residue S1196 participates in NADP(+) binding. FAD is bound by residues Y1197, V1210, C1211, and S1212. NADP(+)-binding residues include T1251, R1284, S1313, R1314, K1320, Y1322, Q1324, D1357, T1398, and R1400.

This sequence belongs to the NOS family. In terms of assembly, homodimer. Interacts with DLG4; the interaction possibly being prevented by the association between NOS1 and CAPON. Forms a ternary complex with CAPON and RASD1. Forms a ternary complex with CAPON and SYN1. Interacts with ZDHHC23. Interacts with NOSIP; which may impair its synaptic location. Interacts with HTR4. Interacts with VAC14. Interacts (via N-terminal domain) with DLG4 (via N-terminal tandem pair of PDZ domains). Interacts with SLC6A4. Forms a complex with ASL, ASS1 and SLC7A1; the complex regulates cell-autonomous L-arginine synthesis and citrulline recycling while channeling extracellular L-arginine to nitric oxide synthesis pathway. Interacts with DMD; localizes NOS1 to sarcolemma in muscle cells. Interacts with DYNLL1; inhibits the nitric oxide synthase activity. The cofactor is heme b. FAD is required as a cofactor. It depends on FMN as a cofactor. (6R)-L-erythro-5,6,7,8-tetrahydrobiopterin serves as cofactor. Ubiquitinated; mediated by STUB1/CHIP in the presence of Hsp70 and Hsp40 (in vitro). Widely expressed in the nervous system: expressed in cerebrum, olfactory bulb, hippocampus, midbrain, cerebellum, pons, medulla oblongata, and spinal cord. Also found in skeletal muscle, where it is localized beneath the sarcolemma of fast twitch muscle fibers, and in spleen, heart, kidney, and liver. N-NOS-1 and N-NOS-2 are found in all parts of the nervous system. NNOS beta and gamma occur in a region-specific manner in the brain and NNOS beta expression is developmentally regulated. NNOS Mu is only found in mature skeletal and cardiac muscles.

It localises to the cell membrane. It is found in the sarcolemma. Its subcellular location is the cell projection. The protein localises to the dendritic spine. It carries out the reaction 2 L-arginine + 3 NADPH + 4 O2 + H(+) = 2 L-citrulline + 2 nitric oxide + 3 NADP(+) + 4 H2O. Its activity is regulated as follows. Stimulated by calcium/calmodulin. Inhibited by DYNLL1 that prevents the dimerization of the protein. Inhibited by NOSIP. Its function is as follows. Produces nitric oxide (NO) which is a messenger molecule with diverse functions throughout the body. In the brain and peripheral nervous system, NO displays many properties of a neurotransmitter. Probably has nitrosylase activity and mediates cysteine S-nitrosylation of cytoplasmic target proteins such SRR. Isoform NNOS Mu may be an effector enzyme for the dystrophin complex. The chain is Nitric oxide synthase 1 from Mus musculus (Mouse).